A 396-amino-acid polypeptide reads, in one-letter code: 26S proteasome non-ATPase regulatory subunit 4 (396 aa).

The VWFA domain occupies 1-188; the sequence is MVLESTMICF…LSDALLSSPI (188 aa). The UIM 1 domain occupies 212–231; it reads NEDPELALALRVSMEEQRQR. The segment covering 225-240 has biased composition (basic and acidic residues); it reads MEEQRQRQESEQRRAN. Disordered stretches follow at residues 225–278, 311–341, and 360–396; these read MEEQ…NTEE, AMQM…APMD, and LENL…SQKK. Positions 249–262 are enriched in gly residues; that stretch reads GDAGGGGGVSGSGP. Residues 263–278 show a composition bias toward low complexity; that stretch reads GNEESAGAENEANTEE. 2 consecutive UIM domains span residues 276-295 and 303-322; these read TEEA…PEDN and TEEE…APDD. Over residues 381-396 the composition is skewed to basic and acidic residues; it reads NKDKDKKSDGKDSQKK.

Belongs to the proteasome subunit S5A family. The 26S proteasome is composed of a core protease, known as the 20S proteasome, capped at one or both ends by the 19S regulatory complex (RC). The RC is composed of at least 18 different subunits in two subcomplexes, the base and the lid, which form the portions proximal and distal to the 20S proteolytic core, respectively. Interacts with Ubc4.

Binds and presumably selects ubiquitin-conjugates for destruction. This Drosophila melanogaster (Fruit fly) protein is 26S proteasome non-ATPase regulatory subunit 4 (Rpn10).